The following is a 256-amino-acid chain: 3-dehydroquinate dehydratase (256 aa).

Residues 46 to 48 (EWR) and R82 each bind 3-dehydroquinate. Residue H144 is the Proton donor/acceptor of the active site. Catalysis depends on K171, which acts as the Schiff-base intermediate with substrate. Residues R213, S232, and Q236 each coordinate 3-dehydroquinate.

Belongs to the type-I 3-dehydroquinase family. In terms of assembly, homodimer.

The enzyme catalyses 3-dehydroquinate = 3-dehydroshikimate + H2O. It participates in metabolic intermediate biosynthesis; chorismate biosynthesis; chorismate from D-erythrose 4-phosphate and phosphoenolpyruvate: step 3/7. Involved in the third step of the chorismate pathway, which leads to the biosynthesis of aromatic amino acids. Catalyzes the cis-dehydration of 3-dehydroquinate (DHQ) and introduces the first double bond of the aromatic ring to yield 3-dehydroshikimate. The sequence is that of 3-dehydroquinate dehydratase from Shouchella clausii (strain KSM-K16) (Alkalihalobacillus clausii).